We begin with the raw amino-acid sequence, 632 residues long: Acyl-coenzyme A oxidase-like protein (632 aa).

An FAD-binding site is contributed by threonine 376–tyrosine 381.

The protein belongs to the acyl-CoA oxidase family. It depends on FAD as a cofactor.

This Mus musculus (Mouse) protein is Acyl-coenzyme A oxidase-like protein (Acoxl).